The following is a 331-amino-acid chain: WW domain-containing protein C2F3.14c (331 aa).

A disordered region spans residues 1–184 (MSSSKDCKAT…TNENQAQPSI (184 aa)). Over residues 9–22 (ATSNVDQTIPASNV) the composition is skewed to polar residues. The segment covering 23–41 (NSGDFISSNTSSSNSENSN) has biased composition (low complexity). Residues 57–89 (SFISENTPKNTFESTQTYENLESISKNEPTSEA) are compositionally biased toward polar residues. Over residues 105-145 (REPPLPNEPVPEEPLPGEPPLPDEPVPEEPLPGEPPLPNEP) the composition is skewed to pro residues. Polar residues predominate over residues 158–184 (SDETVSETSKNDTSNSPTNENQAQPSI). Residues 187–220 (SEGHRIAAIWDPSQQAYYFWDTLTNTTSWNNPLE) enclose the WW domain. Residues 290–309 (YTRKEMEQMKRRTKEKKEMK) are disordered. Positions 292-309 (RKEMEQMKRRTKEKKEMK) are enriched in basic and acidic residues.

The protein localises to the nucleus. The protein is WW domain-containing protein C2F3.14c of Schizosaccharomyces pombe (strain 972 / ATCC 24843) (Fission yeast).